The sequence spans 547 residues: Glucose-6-phosphate isomerase (547 aa).

Glu-353 functions as the Proton donor in the catalytic mechanism. Residues His-384 and Lys-512 contribute to the active site.

It belongs to the GPI family.

The protein resides in the cytoplasm. It catalyses the reaction alpha-D-glucose 6-phosphate = beta-D-fructose 6-phosphate. Its pathway is carbohydrate biosynthesis; gluconeogenesis. It participates in carbohydrate degradation; glycolysis; D-glyceraldehyde 3-phosphate and glycerone phosphate from D-glucose: step 2/4. Catalyzes the reversible isomerization of glucose-6-phosphate to fructose-6-phosphate. This chain is Glucose-6-phosphate isomerase, found in Campylobacter jejuni subsp. doylei (strain ATCC BAA-1458 / RM4099 / 269.97).